The sequence spans 572 residues: 3-ketosteroid oxygenase (572 aa).

2 helical membrane-spanning segments follow: residues alanine 52–leucine 72 and tyrosine 84–isoleucine 104.

It belongs to the cytochrome P450 family. As to expression, expressed in the 2 embryonic head hypodermal cells XXXL/R.

The protein localises to the membrane. The catalysed reaction is 5alpha-cholest-7-en-3-one + 3 reduced [NADPH--hemoprotein reductase] + 3 O2 = (25S)-Delta7-dafachronate + 3 oxidized [NADPH--hemoprotein reductase] + 4 H2O + 4 H(+). It carries out the reaction cholest-4-en-3-one + 3 reduced [NADPH--hemoprotein reductase] + 3 O2 = (25S)-3-oxocholest-4-en-26-oate + 3 oxidized [NADPH--hemoprotein reductase] + 4 H2O + 4 H(+). It participates in steroid hormone biosynthesis; dafachronic acid biosynthesis. Functionally, converts the 3-keto steroids 4-cholesten-3-one and lathosterone into the carboxylic metabolites 3-keto-4-cholestenate (Delta(4)-dafachronic acid, Delta(4)-DA) and 3-keto-7,(5a)-cholestenate (Delta(7)-dafachronic acid, Delta(7)-DA) respectively, by catalyzing successive oxidations at C-26. Dafachronic acids bind directly to the nuclear hormone receptor (NHR) DAF-12, suppressing dauer formation and inducing reproductive growth. In a non-cell autonomous manner, negatively regulates body wall muscle arm extensions to motor neurons probably by preventing daf-12 isoform b activation. May be involved in thermotolerance. This Caenorhabditis elegans protein is 3-ketosteroid oxygenase (daf-9).